The chain runs to 576 residues: Arginine--tRNA ligase (576 aa).

Positions 122–132 (PNVAKQMHVGH) match the 'HIGH' region motif.

Belongs to the class-I aminoacyl-tRNA synthetase family. As to quaternary structure, monomer.

It is found in the cytoplasm. It catalyses the reaction tRNA(Arg) + L-arginine + ATP = L-arginyl-tRNA(Arg) + AMP + diphosphate. The sequence is that of Arginine--tRNA ligase from Yersinia pseudotuberculosis serotype O:3 (strain YPIII).